The primary structure comprises 162 residues: Proepiregulin (162 aa).

The N-terminal stretch at 1 to 22 (METFPAAWVLALLCLGSHLLQA) is a signal peptide. Residues 23-55 (VISTTVIPSCIPEESEDNCTALVQMEDDPRVAQ) constitute a propeptide that is removed on maturation. Asn40 is a glycosylation site (N-linked (GlcNAc...) asparagine). Residues 57-97 (LITKCSSDMDGYCLHGHCIYLVDMSEKYCRCEVGYTGLRCE) enclose the EGF-like domain. 3 disulfide bridges follow: Cys61–Cys74, Cys69–Cys85, and Cys87–Cys96. The propeptide at 102-162 (TVHQPLSREY…TSGGPGLPQV (61 aa)) is removed in mature form. Residues 113-133 (ALTVILVFLFLIVTAGSMYYF) form a helical membrane-spanning segment.

In terms of assembly, interacts with EGFR and ERBB4.

It is found in the secreted. It localises to the extracellular space. The protein resides in the cell membrane. In terms of biological role, ligand of the EGF receptor/EGFR and ERBB4. Stimulates EGFR and ERBB4 tyrosine phosphorylation. Contributes to inflammation, wound healing, tissue repair, and oocyte maturation by regulating angiogenesis and vascular remodeling and by stimulating cell proliferation. In Rattus norvegicus (Rat), this protein is Proepiregulin (Ereg).